The primary structure comprises 666 residues: Enzymatic polyprotein (666 aa).

Asp54 is a catalytic residue. The Reverse transcriptase domain maps to 215-445 (ENPIDPIKSK…EKINFLGLEI (231 aa)).

It belongs to the caulimoviridae enzymatic polyprotein family.

The catalysed reaction is DNA(n) + a 2'-deoxyribonucleoside 5'-triphosphate = DNA(n+1) + diphosphate. Its function is as follows. Encodes for at least two polypeptides: protease (PR) and reverse transcriptase (RT). The protease processes the polyprotein in cis. Reverse transcriptase is multifunctional enzyme that converts the viral RNA genome into dsDNA in viral cytoplasmic capsids. This enzyme displays a DNA polymerase activity that can copy either DNA or RNA templates, and a ribonuclease H (RNase H) activity that cleaves the RNA strand of RNA-DNA heteroduplexes in a partially processive 3'- to 5'-endonucleasic mode. Neo-synthesized pregenomic RNA (pgRNA) are encapsidated, and reverse-transcribed inside the nucleocapsid. Partial (+)DNA is synthesized from the (-)DNA template and generates the relaxed circular DNA (RC-DNA) genome. After budding and infection, the RC-DNA migrates in the nucleus, and is converted into a plasmid-like covalently closed circular DNA (cccDNA). The polypeptide is Enzymatic polyprotein (Figwort mosaic virus (strain DxS) (FMV)).